An 843-amino-acid polypeptide reads, in one-letter code: Translation initiation factor IF-2 (843 aa).

The disordered stretch occupies residues 94-259; the sequence is QRSPEEIEAE…AHGFQSPTGP (166 aa). Basic and acidic residues predominate over residues 96–135; it reads SPEEIEAERKREMDERRAVENAARQKAEEEAKRRAEEDAR. Positions 136-177 are enriched in low complexity; sequence NQPAAGQPASAPAQPVAAAEPVREAPAPAAAAPAPASAAPSA. 2 stretches are compositionally biased toward basic and acidic residues: residues 178–219 and 227–236; these read DARK…EKAP and TTDEESDSFR. Residues 237 to 250 show a composition bias toward basic residues; sequence RGGRGKSRLKKRNA. Positions 343 to 512 constitute a tr-type G domain; it reads SRAPVVTVMG…LLQAEVLELK (170 aa). Residues 352–359 are G1; that stretch reads GHVDHGKT. Residue 352 to 359 participates in GTP binding; it reads GHVDHGKT. A G2 region spans residues 377–381; that stretch reads GITQH. Positions 398–401 are G3; that stretch reads DTPG. Residues 398 to 402 and 452 to 455 each bind GTP; these read DTPGH and NKID. The G4 stretch occupies residues 452 to 455; the sequence is NKID. The segment at 488–490 is G5; that stretch reads SAK.

This sequence belongs to the TRAFAC class translation factor GTPase superfamily. Classic translation factor GTPase family. IF-2 subfamily.

The protein resides in the cytoplasm. In terms of biological role, one of the essential components for the initiation of protein synthesis. Protects formylmethionyl-tRNA from spontaneous hydrolysis and promotes its binding to the 30S ribosomal subunits. Also involved in the hydrolysis of GTP during the formation of the 70S ribosomal complex. This Pseudomonas savastanoi pv. phaseolicola (strain 1448A / Race 6) (Pseudomonas syringae pv. phaseolicola (strain 1448A / Race 6)) protein is Translation initiation factor IF-2.